Consider the following 126-residue polypeptide: Large ribosomal subunit protein bL19 (126 aa).

Belongs to the bacterial ribosomal protein bL19 family.

This protein is located at the 30S-50S ribosomal subunit interface and may play a role in the structure and function of the aminoacyl-tRNA binding site. The sequence is that of Large ribosomal subunit protein bL19 from Bradyrhizobium diazoefficiens (strain JCM 10833 / BCRC 13528 / IAM 13628 / NBRC 14792 / USDA 110).